The primary structure comprises 228 residues: L-ribulose-5-phosphate 4-epimerase UlaF (228 aa).

Residues 26–27 (GN), 43–44 (SG), and 72–73 (SS) each bind substrate. The Zn(2+) site is built by Asp-74, His-93, and His-95. Asp-118 functions as the Proton donor/acceptor in the catalytic mechanism. His-167 serves as a coordination point for Zn(2+). Tyr-225 functions as the Proton donor/acceptor in the catalytic mechanism.

The protein belongs to the aldolase class II family. AraD/FucA subfamily. Zn(2+) is required as a cofactor.

The enzyme catalyses L-ribulose 5-phosphate = D-xylulose 5-phosphate. It participates in cofactor degradation; L-ascorbate degradation; D-xylulose 5-phosphate from L-ascorbate: step 4/4. Functionally, catalyzes the isomerization of L-ribulose 5-phosphate to D-xylulose 5-phosphate. Is involved in the anaerobic L-ascorbate utilization. In Escherichia coli (strain K12 / MC4100 / BW2952), this protein is L-ribulose-5-phosphate 4-epimerase UlaF.